Consider the following 138-residue polypeptide: Large ribosomal subunit protein uL16 (138 aa).

It belongs to the universal ribosomal protein uL16 family. Part of the 50S ribosomal subunit.

Binds 23S rRNA and is also seen to make contacts with the A and possibly P site tRNAs. In Chlamydia pneumoniae (Chlamydophila pneumoniae), this protein is Large ribosomal subunit protein uL16.